Reading from the N-terminus, the 381-residue chain is Probable serine/threonine-protein kinase PBL21 (381 aa).

C3 is lipidated: S-palmitoyl cysteine. Residues 78 to 354 enclose the Protein kinase domain; that stretch reads FREVNLLGEG…GDIVVALEYL (277 aa). ATP is bound by residues 84 to 92 and K106; that span reads LGEGGFGRV. D204 functions as the Proton acceptor in the catalytic mechanism. Residues 362 to 381 are disordered; it reads EARNVSSPSPEISRTPRRDL.

This sequence belongs to the protein kinase superfamily. Ser/Thr protein kinase family. In terms of processing, palmitoylation at Cys-3 and Cys-7 are required for plasma membrane location.

It localises to the cell membrane. It catalyses the reaction L-seryl-[protein] + ATP = O-phospho-L-seryl-[protein] + ADP + H(+). It carries out the reaction L-threonyl-[protein] + ATP = O-phospho-L-threonyl-[protein] + ADP + H(+). Its function is as follows. May be involved in plant defense signaling. The polypeptide is Probable serine/threonine-protein kinase PBL21 (Arabidopsis thaliana (Mouse-ear cress)).